Consider the following 77-residue polypeptide: Defensin-like protein 159 (77 aa).

The signal sequence occupies residues 1 to 27; the sequence is MAKLSCSYFLVLILVFSAFLMVERAEG. 4 disulfide bridges follow: Cys-30–Cys-77, Cys-40–Cys-59, Cys-45–Cys-71, and Cys-49–Cys-73.

This sequence belongs to the DEFL family.

It localises to the secreted. The chain is Defensin-like protein 159 (LCR25) from Arabidopsis thaliana (Mouse-ear cress).